Reading from the N-terminus, the 302-residue chain is Homoserine O-acetyltransferase (302 aa).

C142 (acyl-thioester intermediate) is an active-site residue. Residues K163 and S192 each contribute to the substrate site. Catalysis depends on H235, which acts as the Proton acceptor. E237 is a catalytic residue. A substrate-binding site is contributed by R249.

Belongs to the MetA family.

It is found in the cytoplasm. The catalysed reaction is L-homoserine + acetyl-CoA = O-acetyl-L-homoserine + CoA. It participates in amino-acid biosynthesis; L-methionine biosynthesis via de novo pathway; O-acetyl-L-homoserine from L-homoserine: step 1/1. Functionally, transfers an acetyl group from acetyl-CoA to L-homoserine, forming acetyl-L-homoserine. This Geobacillus kaustophilus protein is Homoserine O-acetyltransferase.